Here is a 224-residue protein sequence, read N- to C-terminus: Orotate phosphoribosyltransferase (224 aa).

Lys-29 serves as a coordination point for 5-phospho-alpha-D-ribose 1-diphosphate. An orotate-binding site is contributed by 37–38 (FF). Residues 75–76 (YK), Arg-105, Lys-106, Lys-109, His-111, and 130–138 (DDVITAGTS) each bind 5-phospho-alpha-D-ribose 1-diphosphate. Residues Thr-134 and Arg-162 each coordinate orotate.

This sequence belongs to the purine/pyrimidine phosphoribosyltransferase family. PyrE subfamily. As to quaternary structure, homodimer. Mg(2+) is required as a cofactor.

It carries out the reaction orotidine 5'-phosphate + diphosphate = orotate + 5-phospho-alpha-D-ribose 1-diphosphate. It functions in the pathway pyrimidine metabolism; UMP biosynthesis via de novo pathway; UMP from orotate: step 1/2. Catalyzes the transfer of a ribosyl phosphate group from 5-phosphoribose 1-diphosphate to orotate, leading to the formation of orotidine monophosphate (OMP). The polypeptide is Orotate phosphoribosyltransferase (Bordetella bronchiseptica (strain ATCC BAA-588 / NCTC 13252 / RB50) (Alcaligenes bronchisepticus)).